The chain runs to 366 residues: tRNA/tmRNA (uracil-C(5))-methyltransferase (366 aa).

S-adenosyl-L-methionine contacts are provided by glutamine 188, tyrosine 216, asparagine 221, glutamate 237, and aspartate 297. The active-site Nucleophile is cysteine 322. Residue glutamate 356 is the Proton acceptor of the active site.

This sequence belongs to the class I-like SAM-binding methyltransferase superfamily. RNA M5U methyltransferase family. TrmA subfamily.

It catalyses the reaction uridine(54) in tRNA + S-adenosyl-L-methionine = 5-methyluridine(54) in tRNA + S-adenosyl-L-homocysteine + H(+). It carries out the reaction uridine(341) in tmRNA + S-adenosyl-L-methionine = 5-methyluridine(341) in tmRNA + S-adenosyl-L-homocysteine + H(+). In terms of biological role, dual-specificity methyltransferase that catalyzes the formation of 5-methyluridine at position 54 (m5U54) in all tRNAs, and that of position 341 (m5U341) in tmRNA (transfer-mRNA). The polypeptide is tRNA/tmRNA (uracil-C(5))-methyltransferase (Histophilus somni (strain 129Pt) (Haemophilus somnus)).